Here is a 140-residue protein sequence, read N- to C-terminus: Putative peptidyl-tRNA hydrolase PTRHD1 (140 aa).

It belongs to the PTH2 family. PTRHD1 subfamily.

It carries out the reaction an N-acyl-L-alpha-aminoacyl-tRNA + H2O = an N-acyl-L-amino acid + a tRNA + H(+). In terms of biological role, as a putative peptidyl-tRNA hydrolase, it might be involved in releasing tRNAs from the ribosome during protein synthesis. Some evidence, however, suggests that it lacks peptidyl-tRNA hydrolase activity. The protein is Putative peptidyl-tRNA hydrolase PTRHD1 (PTRHD1) of Homo sapiens (Human).